The following is a 338-amino-acid chain: uncharacterized protein (338 aa).

This sequence belongs to the MG032/MG096/MG288 family.

This is an uncharacterized protein from Mycoplasma pneumoniae (strain ATCC 29342 / M129 / Subtype 1) (Mycoplasmoides pneumoniae).